A 121-amino-acid polypeptide reads, in one-letter code: MQYLYIFVGGALGALIRFCLSMLNEGSTIPLGTFVANLLGAFLMGSIGALSLSLFKTHPNIKKGLTTGLLGALTTFSTFQFELVTLFNQHHFILFTIYGVTSYILGILSCYLGVKIGGRFS.

The next 4 helical transmembrane spans lie at 3–23, 29–49, 67–87, and 92–112; these read YLYIFVGGALGALIRFCLSML, IPLGTFVANLLGAFLMGSIGA, TGLLGALTTFSTFQFELVTLF, and FILFTIYGVTSYILGILSCYL. Na(+) is bound by residues Gly-71 and Thr-74.

The protein belongs to the fluoride channel Fluc/FEX (TC 1.A.43) family.

It localises to the cell membrane. The catalysed reaction is fluoride(in) = fluoride(out). Na(+) is not transported, but it plays an essential structural role and its presence is essential for fluoride channel function. In terms of biological role, fluoride-specific ion channel. Important for reducing fluoride concentration in the cell, thus reducing its toxicity. The sequence is that of Fluoride-specific ion channel FluC 1 from Staphylococcus epidermidis (strain ATCC 35984 / DSM 28319 / BCRC 17069 / CCUG 31568 / BM 3577 / RP62A).